Consider the following 216-residue polypeptide: Kynurenine formamidase (216 aa).

A substrate-binding site is contributed by W24. H54, H58, and D60 together coordinate Zn(2+). The active-site Proton donor/acceptor is the H64. Zn(2+)-binding residues include H164 and E176.

The protein belongs to the Cyclase 1 superfamily. KynB family. In terms of assembly, homodimer. Requires Zn(2+) as cofactor.

It carries out the reaction N-formyl-L-kynurenine + H2O = L-kynurenine + formate + H(+). The protein operates within amino-acid degradation; L-tryptophan degradation via kynurenine pathway; L-kynurenine from L-tryptophan: step 2/2. Its function is as follows. Catalyzes the hydrolysis of N-formyl-L-kynurenine to L-kynurenine, the second step in the kynurenine pathway of tryptophan degradation. In Erythrobacter litoralis (strain HTCC2594), this protein is Kynurenine formamidase.